Consider the following 347-residue polypeptide: NADH-ubiquinone oxidoreductase chain 2 (347 aa).

11 helical membrane-spanning segments follow: residues 1–21 (MNPL…VIVM), 25–45 (HWLT…PMLM), 59–79 (YFLT…INLT), 96–116 (IIMT…FWVP), 127–147 (CLIL…MISP), 149–169 (INLN…GWGG), 178–198 (IMAY…AYNP), 200–220 (MTML…MLLI), 237–257 (IPLV…LPPL), 276–296 (IILP…YMRL), and 325–345 (LLSP…TMLL).

It belongs to the complex I subunit 2 family. Core subunit of respiratory chain NADH dehydrogenase (Complex I) which is composed of 45 different subunits. Interacts with TMEM242.

The protein localises to the mitochondrion inner membrane. The enzyme catalyses a ubiquinone + NADH + 5 H(+)(in) = a ubiquinol + NAD(+) + 4 H(+)(out). Functionally, core subunit of the mitochondrial membrane respiratory chain NADH dehydrogenase (Complex I) which catalyzes electron transfer from NADH through the respiratory chain, using ubiquinone as an electron acceptor. Essential for the catalytic activity and assembly of complex I. The polypeptide is NADH-ubiquinone oxidoreductase chain 2 (Natalus tumidirostris (Trinidadian funnel-eared bat)).